We begin with the raw amino-acid sequence, 1224 residues long: Tyrosine-protein kinase abl-1 (1224 aa).

The region spanning 115–188 (SSAPLFVALY…PSNFIAPYNS (74 aa)) is the SH3 domain. In terms of domain architecture, SH2 spans 194–284 (WYHGKISRSD…GLICLLMYPA (91 aa)). The Protein kinase domain occupies 311–562 (IIMHNKLGGG…PRFRDIHFNL (252 aa)). ATP contacts are provided by residues 317-325 (LGGGQYGDV), K340, and 385-391 (EFMCNGN). D432 acts as the Proton acceptor in catalysis. Positions 450-474 (DFGLARFMKEDTYTAHAGAKFPIKW) match the Kinase activation loop motif. Residues 579 to 620 (LKKNNDKKLESDKRRSNVRERSDSKSRHSSHHDRDRDRESLH) show a composition bias toward basic and acidic residues. Disordered regions lie at residues 579 to 671 (LKKN…NTKP), 736 to 775 (KEST…STYV), 796 to 881 (KRSE…DVGM), 914 to 937 (LRHV…ATDN), and 968 to 1016 (RPFS…RSNG). Composition is skewed to polar residues over residues 639-655 (SVSF…TSFR) and 746-760 (AGSS…NDSL). 2 stretches are compositionally biased toward basic and acidic residues: residues 797 to 819 (RSET…KSEK) and 864 to 877 (PDSK…ETTK). Positions 973-984 (QCPNNSTSSAIS) are enriched in polar residues. Residues 1001-1016 (YEERMKPELPRKRSNG) show a composition bias toward basic and acidic residues.

This sequence belongs to the protein kinase superfamily. Tyr protein kinase family. ABL subfamily. Interacts (via SH2 and SH3 domains) with mig-13; the interaction is direct. May interact with soem-1.

The protein resides in the cell membrane. It localises to the cytoplasm. It catalyses the reaction L-tyrosyl-[protein] + ATP = O-phospho-L-tyrosyl-[protein] + ADP + H(+). Functions downstream of migratory protein mig-13 and is involved in Q neuroblast migration during larval development. Recruited by mig-13 to the leading edge of Q neuroblasts and their descendents to signal downstream, likely to the wve-1 pathway, and direct migration along the anteroposterior body axis. Promotes germline cell apoptosis in response to oxidative, osmotic and heat shock stresses. The polypeptide is Tyrosine-protein kinase abl-1 (abl-1) (Caenorhabditis elegans).